The chain runs to 445 residues: Tubulin beta-2 chain (445 aa).

Residues Gln-11, Glu-69, Ser-138, Gly-142, Thr-143, Gly-144, Asn-204, and Asn-226 each contribute to the GTP site. Glu-69 serves as a coordination point for Mg(2+). Positions 424 to 445 are disordered; the sequence is QYQDATAEDEGEFDEDEEVEEA. Residues 429 to 445 are compositionally biased toward acidic residues; it reads TAEDEGEFDEDEEVEEA.

This sequence belongs to the tubulin family. As to quaternary structure, dimer of alpha and beta chains. A typical microtubule is a hollow water-filled tube with an outer diameter of 25 nm and an inner diameter of 15 nM. Alpha-beta heterodimers associate head-to-tail to form protofilaments running lengthwise along the microtubule wall with the beta-tubulin subunit facing the microtubule plus end conferring a structural polarity. Microtubules usually have 13 protofilaments but different protofilament numbers can be found in some organisms and specialized cells. Mg(2+) serves as cofactor.

The protein localises to the cytoplasm. The protein resides in the cytoskeleton. Its function is as follows. Tubulin is the major constituent of microtubules, a cylinder consisting of laterally associated linear protofilaments composed of alpha- and beta-tubulin heterodimers. Microtubules grow by the addition of GTP-tubulin dimers to the microtubule end, where a stabilizing cap forms. Below the cap, tubulin dimers are in GDP-bound state, owing to GTPase activity of alpha-tubulin. In Echinococcus multilocularis (Fox tapeworm), this protein is Tubulin beta-2 chain (TUB-2).